Consider the following 291-residue polypeptide: Light-independent protochlorophyllide reductase iron-sulfur ATP-binding protein (291 aa).

ATP is bound by residues 10 to 15 and K39; that span reads GIGKST. S14 provides a ligand contact to Mg(2+). 2 residues coordinate [4Fe-4S] cluster: C95 and C129. ATP is bound at residue 180–181; that stretch reads NR.

This sequence belongs to the NifH/BchL/ChlL family. As to quaternary structure, homodimer. Protochlorophyllide reductase is composed of three subunits; ChlL, ChlN and ChlB. It depends on [4Fe-4S] cluster as a cofactor.

It is found in the plastid. Its subcellular location is the chloroplast. It carries out the reaction chlorophyllide a + oxidized 2[4Fe-4S]-[ferredoxin] + 2 ADP + 2 phosphate = protochlorophyllide a + reduced 2[4Fe-4S]-[ferredoxin] + 2 ATP + 2 H2O. The protein operates within porphyrin-containing compound metabolism; chlorophyll biosynthesis (light-independent). Its function is as follows. Component of the dark-operative protochlorophyllide reductase (DPOR) that uses Mg-ATP and reduced ferredoxin to reduce ring D of protochlorophyllide (Pchlide) to form chlorophyllide a (Chlide). This reaction is light-independent. The L component serves as a unique electron donor to the NB-component of the complex, and binds Mg-ATP. In Picea abies (Norway spruce), this protein is Light-independent protochlorophyllide reductase iron-sulfur ATP-binding protein.